The sequence spans 158 residues: Photosystem I assembly protein Ycf3 (158 aa).

TPR repeat units lie at residues 35 to 68 (AFSY…EEDV), 72 to 105 (SYII…NPRL), and 113 to 146 (AVIY…APGQ).

The protein belongs to the Ycf3 family.

Its subcellular location is the plastid. It is found in the chloroplast thylakoid membrane. Its function is as follows. Essential for the assembly of the photosystem I (PSI) complex. May act as a chaperone-like factor to guide the assembly of the PSI subunits. In Cyanidioschyzon merolae (strain NIES-3377 / 10D) (Unicellular red alga), this protein is Photosystem I assembly protein Ycf3.